The primary structure comprises 35 residues: Dolichyl-diphosphooligosaccharide--protein glycosyltransferase subunit 4C (35 aa).

Topologically, residues 1–8 (MFDDQDLG) are lumenal. The chain crosses the membrane as a helical span at residues 9-29 (FFANFLGIFIFILVIAYHFVM). At 30 to 35 (ADPKFE) the chain is on the cytoplasmic side.

It belongs to the OST4 family. Component of the oligosaccharyltransferase (OST) complex.

It localises to the endoplasmic reticulum membrane. Its function is as follows. Subunit of the oligosaccharyl transferase (OST) complex that catalyzes the initial transfer of a defined glycan (Glc(3)Man(9)GlcNAc(2) in eukaryotes) from the lipid carrier dolichol-pyrophosphate to an asparagine residue within an Asn-X-Ser/Thr consensus motif in nascent polypeptide chains, the first step in protein N-glycosylation. N-glycosylation occurs cotranslationally and the complex associates with the Sec61 complex at the channel-forming translocon complex that mediates protein translocation across the endoplasmic reticulum (ER). All subunits are required for a maximal enzyme activity. This Arabidopsis thaliana (Mouse-ear cress) protein is Dolichyl-diphosphooligosaccharide--protein glycosyltransferase subunit 4C (OST4C).